The primary structure comprises 422 residues: Glutamyl-tRNA reductase (422 aa).

Substrate-binding positions include 49–52 (TCNR), Ser110, 115–117 (EPQ), and Gln121. Cys50 (nucleophile) is an active-site residue. 190–195 (GAGETI) serves as a coordination point for NADP(+).

Belongs to the glutamyl-tRNA reductase family. In terms of assembly, homodimer.

The enzyme catalyses (S)-4-amino-5-oxopentanoate + tRNA(Glu) + NADP(+) = L-glutamyl-tRNA(Glu) + NADPH + H(+). It functions in the pathway porphyrin-containing compound metabolism; protoporphyrin-IX biosynthesis; 5-aminolevulinate from L-glutamyl-tRNA(Glu): step 1/2. Functionally, catalyzes the NADPH-dependent reduction of glutamyl-tRNA(Glu) to glutamate 1-semialdehyde (GSA). This chain is Glutamyl-tRNA reductase, found in Colwellia psychrerythraea (strain 34H / ATCC BAA-681) (Vibrio psychroerythus).